Consider the following 618-residue polypeptide: Probable N-acetylgalactosaminyltransferase 6 (618 aa).

Residues 1 to 16 (MIASLIRSRRRSRRCV) are Cytoplasmic-facing. A helical; Signal-anchor for type II membrane protein transmembrane segment spans residues 17–39 (VYSVFLFGFLALWGSFALALVFL). The Lumenal portion of the chain corresponds to 40-618 (SDMYIGEDQI…TEMSWLPEHP (579 aa)). 2 N-linked (GlcNAc...) asparagine glycosylation sites follow: N81 and N149. Intrachain disulfides connect C147/C381 and C372/C452. The interval 156 to 267 (LPTTSVIIVY…KGWLEPLLTR (112 aa)) is catalytic subdomain A. The substrate site is built by D197 and R228. D251 provides a ligand contact to Mn(2+). S252 is a substrate binding site. H253 contacts Mn(2+). Positions 327–389 (PIESPTMAGG…PCSHVGHVFR (63 aa)) are catalytic subdomain B. W358 contacts substrate. H386 contacts Mn(2+). R389 contributes to the substrate binding site. One can recognise a Ricin B-type lectin domain in the interval 474-609 (RFGRMTSSSN…SNDRQNWTIT (136 aa)). N-linked (GlcNAc...) asparagine glycosylation is present at N483. Cystine bridges form between C487-C505, C530-C550, and C575-C597. N605 carries an N-linked (GlcNAc...) asparagine glycan.

This sequence belongs to the glycosyltransferase 2 family. GalNAc-T subfamily. The cofactor is Mn(2+).

It localises to the golgi apparatus membrane. Its pathway is protein modification; protein glycosylation. In terms of biological role, probable glycopeptide transferase involved in O-linked oligosaccharide biosynthesis. Glycopeptide transferases catalyze the transfer of an N-acetyl-D-galactosamine residue to an already glycosylated peptide. In contrast to other members of the family, it does not act as a peptide transferase that transfers GalNAc onto serine or threonine residue on peptides that have been tested. Some peptide transferase activity is however not excluded, considering that its appropriate peptide substrate may remain unidentified. This Caenorhabditis elegans protein is Probable N-acetylgalactosaminyltransferase 6 (gly-6).